Here is a 151-residue protein sequence, read N- to C-terminus: MKLVIQRVSQAHVNVEGTTVGAIRTGLVVLVGISKSDTIKDADYLADKVLGLRIFPDNEGKMNRNVAEAHGAILIISQFTLYGDCRRGRRPSFDAAAAPGEALTLYNYFVDTVRKSPVPVETGTFQATMEVSLVNQGPVTIVIESEERNRK.

A Gly-cisPro motif, important for rejection of L-amino acids motif is present at residues 137–138 (GP).

This sequence belongs to the DTD family. As to quaternary structure, homodimer.

The protein localises to the cytoplasm. It catalyses the reaction glycyl-tRNA(Ala) + H2O = tRNA(Ala) + glycine + H(+). It carries out the reaction a D-aminoacyl-tRNA + H2O = a tRNA + a D-alpha-amino acid + H(+). Its function is as follows. An aminoacyl-tRNA editing enzyme that deacylates mischarged D-aminoacyl-tRNAs. Also deacylates mischarged glycyl-tRNA(Ala), protecting cells against glycine mischarging by AlaRS. Acts via tRNA-based rather than protein-based catalysis; rejects L-amino acids rather than detecting D-amino acids in the active site. By recycling D-aminoacyl-tRNA to D-amino acids and free tRNA molecules, this enzyme counteracts the toxicity associated with the formation of D-aminoacyl-tRNA entities in vivo and helps enforce protein L-homochirality. The chain is D-aminoacyl-tRNA deacylase from Solibacter usitatus (strain Ellin6076).